Reading from the N-terminus, the 126-residue chain is Gas vesicle protein J (126 aa).

This sequence belongs to the gas vesicle GvpA family. As to quaternary structure, interacts with GvpA.

Its subcellular location is the gas vesicle. Functionally, a minor component of the gas vesicle, might be involved in nucleating gas vesicle formation. Gas vesicles (GV) are hollow, gas filled proteinaceous nanostructures. During planktonic growth they allow positioning of the organism at a favorable depth for light or nutrient acquisition. The protein is Gas vesicle protein J of Pseudanabaena galeata (strain PCC 6901).